The chain runs to 112 residues: Putative transposase YkgN (112 aa).

The protein belongs to the transposase 8 family.

This is Putative transposase YkgN (ykgN) from Escherichia coli (strain K12).